A 698-amino-acid chain; its full sequence is UvrABC system protein B (698 aa).

Residues 35–210 (ARLQAGEKDI…TFRVRGDTVE (176 aa)) form the Helicase ATP-binding domain. 48–55 (GATGTGKS) provides a ligand contact to ATP. A Beta-hairpin motif is present at residues 101–124 (YYDYYQPEAYVPSSDTYIEKDSSI). Positions 438–604 (QIDDLLAEIN…PLRKRIGDIT (167 aa)) constitute a Helicase C-terminal domain. The region spanning 654–689 (AELIQELTDQMHVAAGELQFEVAARLRDEISDLKKE) is the UVR domain.

The protein belongs to the UvrB family. In terms of assembly, forms a heterotetramer with UvrA during the search for lesions. Interacts with UvrC in an incision complex.

The protein resides in the cytoplasm. In terms of biological role, the UvrABC repair system catalyzes the recognition and processing of DNA lesions. A damage recognition complex composed of 2 UvrA and 2 UvrB subunits scans DNA for abnormalities. Upon binding of the UvrA(2)B(2) complex to a putative damaged site, the DNA wraps around one UvrB monomer. DNA wrap is dependent on ATP binding by UvrB and probably causes local melting of the DNA helix, facilitating insertion of UvrB beta-hairpin between the DNA strands. Then UvrB probes one DNA strand for the presence of a lesion. If a lesion is found the UvrA subunits dissociate and the UvrB-DNA preincision complex is formed. This complex is subsequently bound by UvrC and the second UvrB is released. If no lesion is found, the DNA wraps around the other UvrB subunit that will check the other stand for damage. In Beutenbergia cavernae (strain ATCC BAA-8 / DSM 12333 / CCUG 43141 / JCM 11478 / NBRC 16432 / NCIMB 13614 / HKI 0122), this protein is UvrABC system protein B.